Consider the following 670-residue polypeptide: DNA ligase (670 aa).

NAD(+) contacts are provided by residues 32–36, 81–82, and Glu113; these read DAEYD and SL. The N6-AMP-lysine intermediate role is filled by Lys115. NAD(+) contacts are provided by Arg136, Glu173, Lys290, and Lys314. The Zn(2+) site is built by Cys408, Cys411, Cys426, and Cys432. Positions 592–670 constitute a BRCT domain; the sequence is EIDSPFAGKT…EAEMIRLLGE (79 aa).

Belongs to the NAD-dependent DNA ligase family. LigA subfamily. The cofactor is Mg(2+). It depends on Mn(2+) as a cofactor.

It carries out the reaction NAD(+) + (deoxyribonucleotide)n-3'-hydroxyl + 5'-phospho-(deoxyribonucleotide)m = (deoxyribonucleotide)n+m + AMP + beta-nicotinamide D-nucleotide.. In terms of biological role, DNA ligase that catalyzes the formation of phosphodiester linkages between 5'-phosphoryl and 3'-hydroxyl groups in double-stranded DNA using NAD as a coenzyme and as the energy source for the reaction. It is essential for DNA replication and repair of damaged DNA. This Yersinia pseudotuberculosis serotype O:1b (strain IP 31758) protein is DNA ligase.